A 335-amino-acid polypeptide reads, in one-letter code: Methylthioribose-1-phosphate isomerase (335 aa).

Residues 43 to 45, R86, and Q193 each bind substrate; that span reads RGA. D234 serves as the catalytic Proton donor. Substrate is bound at residue 244–245; the sequence is NK.

It belongs to the eIF-2B alpha/beta/delta subunits family. MtnA subfamily.

It carries out the reaction 5-(methylsulfanyl)-alpha-D-ribose 1-phosphate = 5-(methylsulfanyl)-D-ribulose 1-phosphate. Its pathway is amino-acid biosynthesis; L-methionine biosynthesis via salvage pathway; L-methionine from S-methyl-5-thio-alpha-D-ribose 1-phosphate: step 1/6. Its function is as follows. Catalyzes the interconversion of methylthioribose-1-phosphate (MTR-1-P) into methylthioribulose-1-phosphate (MTRu-1-P). The chain is Methylthioribose-1-phosphate isomerase from Parabacteroides distasonis (strain ATCC 8503 / DSM 20701 / CIP 104284 / JCM 5825 / NCTC 11152).